The chain runs to 930 residues: Translation initiation factor IF-2 (930 aa).

Residues 27-342 (LGLDVKSHSS…APKPVTERKF (316 aa)) are disordered. The span at 52–103 (KAAAPQAPAEKPVAAQPSPQKTPAKEAAPVKAEPTEAKAAAQPEAKTETAAP) shows a compositional bias: low complexity. Composition is skewed to basic and acidic residues over residues 112–128 (FKAE…ERRK) and 136–178 (QNKE…DGRR). Polar residues predominate over residues 183–195 (HQGFNGQKRQQPQ). The span at 218–245 (RSSEERFKQAQEAKEVMERQNRRKEQPK) shows a compositional bias: basic and acidic residues. Residues 251-268 (PVQPAPAPSAPAANPSPA) are compositionally biased toward pro residues. The span at 280-297 (ARPDKKRDDFDREEEGPR) shows a compositional bias: basic and acidic residues. A compositionally biased stretch (low complexity) spans 302–318 (NRSSQNQVRNQRNSNWN). In terms of domain architecture, tr-type G spans 432–599 (ERPPVVTIMG…TVLLVAEIQE (168 aa)). The G1 stretch occupies residues 441 to 448 (GHVDHGKT). GTP is bound at residue 441-448 (GHVDHGKT). The interval 466–470 (GITQH) is G2. Positions 487-490 (DTPG) are G3. GTP-binding positions include 487–491 (DTPGH) and 541–544 (NKID). Residues 541–544 (NKID) form a G4 region. The G5 stretch occupies residues 577 to 579 (SAK).

This sequence belongs to the TRAFAC class translation factor GTPase superfamily. Classic translation factor GTPase family. IF-2 subfamily.

Its subcellular location is the cytoplasm. In terms of biological role, one of the essential components for the initiation of protein synthesis. Protects formylmethionyl-tRNA from spontaneous hydrolysis and promotes its binding to the 30S ribosomal subunits. Also involved in the hydrolysis of GTP during the formation of the 70S ribosomal complex. The chain is Translation initiation factor IF-2 from Streptococcus sanguinis (strain SK36).